A 96-amino-acid polypeptide reads, in one-letter code: (4S)-4-hydroxy-5-phosphonooxypentane-2,3-dione isomerase (96 aa).

Positions 2–91 (HVTLVEINVH…MTGPRTKKVF (90 aa)) constitute an ABM domain.

This sequence belongs to the LsrG family. As to quaternary structure, homodimer.

Its subcellular location is the cytoplasm. The catalysed reaction is (2S)-2-hydroxy-3,4-dioxopentyl phosphate = 3-hydroxy-2,4-dioxopentyl phosphate. In terms of biological role, involved in the degradation of phospho-AI-2, thereby terminating induction of the lsr operon and closing the AI-2 signaling cycle. Catalyzes the conversion of (4S)-4-hydroxy-5-phosphonooxypentane-2,3-dione (P-DPD) to 3-hydroxy-5-phosphonooxypentane-2,4-dione (P-HPD). The sequence is that of (4S)-4-hydroxy-5-phosphonooxypentane-2,3-dione isomerase from Salmonella typhimurium (strain LT2 / SGSC1412 / ATCC 700720).